Consider the following 130-residue polypeptide: Protein Wnt-9 (130 aa).

Residue serine 1 is the site of O-palmitoleoyl serine; by PORCN attachment. The interval 41 to 69 is disordered; sequence AGERTIARSRRRPREQRGQRRPKVSDGAL. Residues 47-62 are compositionally biased toward basic residues; sequence ARSRRRPREQRGQRRP. An N-linked (GlcNAc...) asparagine glycan is attached at asparagine 97. Cysteine 100 and cysteine 111 are oxidised to a cystine.

It belongs to the Wnt family. In terms of processing, palmitoleoylation is required for efficient binding to frizzled receptors. Depalmitoleoylation leads to Wnt signaling pathway inhibition.

The protein localises to the secreted. It localises to the extracellular space. It is found in the extracellular matrix. Functionally, ligand for members of the frizzled family of seven transmembrane receptors. Probable developmental protein. May be a signaling molecule which affects the development of discrete regions of tissues. Is likely to signal over only few cell diameters. In Eptatretus stoutii (Pacific hagfish), this protein is Protein Wnt-9 (WNT-9).